The sequence spans 151 residues: MRVLLQRCYEASVSVEEEVISEIAGGLCLLVGFTHTDTPETVDYMAKKIVGLRIFEDESEKMNISLADRGGAILSVSQFTLYADVSKGKRPSFTKSAPGEKAEALYDLFNQKLADSGIIVETGVFGAMMDVKIVNHGPITIMLDSDEMRSK.

Positions 137-138 (GP) match the Gly-cisPro motif, important for rejection of L-amino acids motif.

Belongs to the DTD family. As to quaternary structure, homodimer.

It is found in the cytoplasm. It carries out the reaction glycyl-tRNA(Ala) + H2O = tRNA(Ala) + glycine + H(+). The enzyme catalyses a D-aminoacyl-tRNA + H2O = a tRNA + a D-alpha-amino acid + H(+). In terms of biological role, an aminoacyl-tRNA editing enzyme that deacylates mischarged D-aminoacyl-tRNAs. Also deacylates mischarged glycyl-tRNA(Ala), protecting cells against glycine mischarging by AlaRS. Acts via tRNA-based rather than protein-based catalysis; rejects L-amino acids rather than detecting D-amino acids in the active site. By recycling D-aminoacyl-tRNA to D-amino acids and free tRNA molecules, this enzyme counteracts the toxicity associated with the formation of D-aminoacyl-tRNA entities in vivo and helps enforce protein L-homochirality. This chain is D-aminoacyl-tRNA deacylase, found in Listeria monocytogenes serotype 4a (strain HCC23).